Consider the following 65-residue polypeptide: Potassium channel toxin alpha-KTx 12.6 (65 aa).

The first 22 residues, 1–22 (MKMKIFIITIVIALFITSIVEA), serve as a signal peptide directing secretion. Intrachain disulfides connect Cys30-Cys51, Cys36-Cys56, and Cys40-Cys58.

This sequence belongs to the short scorpion toxin superfamily. Potassium channel inhibitor family. Alpha-KTx 12 subfamily. In terms of tissue distribution, expressed by the venom gland.

Its subcellular location is the secreted. Its function is as follows. Inhibits voltage-gated potassium channels. The sequence is that of Potassium channel toxin alpha-KTx 12.6 from Lychas mucronatus (Chinese swimming scorpion).